A 277-amino-acid chain; its full sequence is Bifunctional protein FolD 1 (277 aa).

Residues 162-164 and Ser187 contribute to the NADP(+) site; that span reads GDS.

This sequence belongs to the tetrahydrofolate dehydrogenase/cyclohydrolase family. In terms of assembly, homodimer.

The catalysed reaction is (6R)-5,10-methylene-5,6,7,8-tetrahydrofolate + NADP(+) = (6R)-5,10-methenyltetrahydrofolate + NADPH. It carries out the reaction (6R)-5,10-methenyltetrahydrofolate + H2O = (6R)-10-formyltetrahydrofolate + H(+). It functions in the pathway one-carbon metabolism; tetrahydrofolate interconversion. Catalyzes the oxidation of 5,10-methylenetetrahydrofolate to 5,10-methenyltetrahydrofolate and then the hydrolysis of 5,10-methenyltetrahydrofolate to 10-formyltetrahydrofolate. The polypeptide is Bifunctional protein FolD 1 (Syntrophomonas wolfei subsp. wolfei (strain DSM 2245B / Goettingen)).